The following is a 170-amino-acid chain: Large ribosomal subunit protein uL11 (170 aa).

It belongs to the universal ribosomal protein uL11 family. In terms of assembly, part of the ribosomal stalk of the 50S ribosomal subunit. Interacts with L10 and the large rRNA to form the base of the stalk. L10 forms an elongated spine to which L12 dimers bind in a sequential fashion forming a multimeric L10(L12)X complex.

In terms of biological role, forms part of the ribosomal stalk which helps the ribosome interact with GTP-bound translation factors. In Saccharolobus islandicus (strain M.14.25 / Kamchatka #1) (Sulfolobus islandicus), this protein is Large ribosomal subunit protein uL11.